The primary structure comprises 328 residues: tRNA dimethylallyltransferase (328 aa).

Gly25–Thr32 contributes to the ATP binding site. Thr27–Thr32 is a substrate binding site. The interval Asp50–Gln53 is interaction with substrate tRNA.

This sequence belongs to the IPP transferase family. In terms of assembly, monomer. Mg(2+) serves as cofactor.

The catalysed reaction is adenosine(37) in tRNA + dimethylallyl diphosphate = N(6)-dimethylallyladenosine(37) in tRNA + diphosphate. Functionally, catalyzes the transfer of a dimethylallyl group onto the adenine at position 37 in tRNAs that read codons beginning with uridine, leading to the formation of N6-(dimethylallyl)adenosine (i(6)A). The protein is tRNA dimethylallyltransferase of Halothermothrix orenii (strain H 168 / OCM 544 / DSM 9562).